We begin with the raw amino-acid sequence, 386 residues long: Succinate--CoA ligase [ADP-forming] subunit beta (386 aa).

Residues 9–244 (KELFANYGVP…LDEEEPLEVE (236 aa)) form the ATP-grasp domain. ATP is bound by residues K46, 53–55 (GRG), E99, L102, and E107. Mg(2+) contacts are provided by N199 and D213. Residues N264 and 321-323 (GIL) contribute to the substrate site.

This sequence belongs to the succinate/malate CoA ligase beta subunit family. In terms of assembly, heterotetramer of two alpha and two beta subunits. Requires Mg(2+) as cofactor.

The enzyme catalyses succinate + ATP + CoA = succinyl-CoA + ADP + phosphate. It catalyses the reaction GTP + succinate + CoA = succinyl-CoA + GDP + phosphate. The protein operates within carbohydrate metabolism; tricarboxylic acid cycle; succinate from succinyl-CoA (ligase route): step 1/1. Functionally, succinyl-CoA synthetase functions in the citric acid cycle (TCA), coupling the hydrolysis of succinyl-CoA to the synthesis of either ATP or GTP and thus represents the only step of substrate-level phosphorylation in the TCA. The beta subunit provides nucleotide specificity of the enzyme and binds the substrate succinate, while the binding sites for coenzyme A and phosphate are found in the alpha subunit. The chain is Succinate--CoA ligase [ADP-forming] subunit beta from Desulfatibacillum aliphaticivorans.